The following is a 380-amino-acid chain: Succinyl-diaminopimelate desuccinylase (380 aa).

Histidine 69 contributes to the Zn(2+) binding site. Aspartate 71 is a catalytic residue. Aspartate 102 is a binding site for Zn(2+). The active-site Proton acceptor is glutamate 135. 3 residues coordinate Zn(2+): glutamate 136, glutamate 164, and histidine 353.

It belongs to the peptidase M20A family. DapE subfamily. In terms of assembly, homodimer. Zn(2+) serves as cofactor. It depends on Co(2+) as a cofactor.

It carries out the reaction N-succinyl-(2S,6S)-2,6-diaminopimelate + H2O = (2S,6S)-2,6-diaminopimelate + succinate. The protein operates within amino-acid biosynthesis; L-lysine biosynthesis via DAP pathway; LL-2,6-diaminopimelate from (S)-tetrahydrodipicolinate (succinylase route): step 3/3. Functionally, catalyzes the hydrolysis of N-succinyl-L,L-diaminopimelic acid (SDAP), forming succinate and LL-2,6-diaminopimelate (DAP), an intermediate involved in the bacterial biosynthesis of lysine and meso-diaminopimelic acid, an essential component of bacterial cell walls. This chain is Succinyl-diaminopimelate desuccinylase, found in Cereibacter sphaeroides (strain ATCC 17029 / ATH 2.4.9) (Rhodobacter sphaeroides).